The following is a 197-amino-acid chain: Protein Hikeshi (197 aa).

The segment at 18–55 is required for F-X-F-G repeats-nucleoporins recognition and nuclear import; it reads VAEDKFVFDLPDYESINHVVVFMLGTIPFPEGMGGSVY. Residues 124-134 form a flexible linker region involved in nuclear import of HSP70 proteins region; that stretch reads QTPVGNAAVSS.

It belongs to the OPI10 family. In terms of assembly, forms an asymmetric homodimer; required for binding and nuclear import of HSP70 proteins. Interacts with ATP-bound HSP70 proteins. Interacts with NUP62 and NUP153 (via F-X-F-G repeats). Interacts with HSPA8.

The protein resides in the cytoplasm. It localises to the cytosol. It is found in the nucleus. In terms of biological role, acts as a specific nuclear import carrier for HSP70 proteins following heat-shock stress: acts by mediating the nucleoporin-dependent translocation of ATP-bound HSP70 proteins into the nucleus. HSP70 proteins import is required to protect cells from heat shock damages. Does not translocate ADP-bound HSP70 proteins into the nucleus. This Homo sapiens (Human) protein is Protein Hikeshi.